Reading from the N-terminus, the 141-residue chain is Large ribosomal subunit protein uL16 (141 aa).

The segment covering 1 to 21 (MLMPKRTKFRKQMKGRNRGKS) has biased composition (basic residues). The segment at 1–22 (MLMPKRTKFRKQMKGRNRGKSF) is disordered.

The protein belongs to the universal ribosomal protein uL16 family. In terms of assembly, part of the 50S ribosomal subunit.

Its function is as follows. Binds 23S rRNA and is also seen to make contacts with the A and possibly P site tRNAs. The sequence is that of Large ribosomal subunit protein uL16 from Wolinella succinogenes (strain ATCC 29543 / DSM 1740 / CCUG 13145 / JCM 31913 / LMG 7466 / NCTC 11488 / FDC 602W) (Vibrio succinogenes).